Consider the following 396-residue polypeptide: KiSS-1 receptor (396 aa).

Residues 1 to 46 (MAAEATLGPNVSWWAPSNASGCPGCGVNASDGPGSAPRPLDAWLVP) lie on the Extracellular side of the membrane. Residues N10, N18, and N28 are each glycosylated (N-linked (GlcNAc...) asparagine). The helical transmembrane segment at 47–67 (LFFAALMLLGLVGNSLVIFVI) threads the bilayer. Topologically, residues 68–90 (CRHKHMQTVTNFYIANLAATDVT) are cytoplasmic. A helical transmembrane segment spans residues 91-111 (FLLCCVPFTALLYPLPTWVLG). Topologically, residues 112 to 120 (DFMCKFVNY) are extracellular. A disulfide bridge links C115 with C191. A helical transmembrane segment spans residues 121-138 (IQQVSVQATCATLTAMSV). Topologically, residues 139 to 159 (DRWYVTVFPLRALHRRTPRLA) are cytoplasmic. A helical transmembrane segment spans residues 160-180 (LTVSLSIWVGSAAVSAPVLAL). Over 181 to 202 (HRLSPGPHTYCSEAFPSRALER) the chain is Extracellular. The helical transmembrane segment at 203–223 (AFALYNLLALYLLPLLATCAC) threads the bilayer. The Cytoplasmic portion of the chain corresponds to 224-264 (YGAMLRHLGRAAVRPAPTDGALQGQLLAQRAGAVRTKVSRL). Residues 265–285 (VAAVVLLFAACWGPIQLFLVL) form a helical membrane-spanning segment. At 286 to 305 (QALGPSGAWHPRSYAAYALK) the chain is on the extracellular side. Residues 306–326 (IWAHCMSYSNSALNPLLYAFL) traverse the membrane as a helical segment. At 327-396 (GSHFRQAFCR…SVQDEHTAPL (70 aa)) the chain is on the cytoplasmic side. The disordered stretch occupies residues 346-396 (RRPHASAHSDRAAPHSVPHSRAAHPVRVRTPEPGNPVRRSPSVQDEHTAPL).

It belongs to the G-protein coupled receptor 1 family. Highest expression levels in the cerebrum and cecum. Moderate expression in the ovary, colon and placenta. Low levels in the uterus, small intestine, and thymus. Expressed only moderately in the placenta. No expression in kidney tissues. Has a complex and abundant central nervous system expression pattern. Expressed in brain regions such as pons, midbrain, thalamus, hypothalamus, hippocampus, amygdala, cortex, frontal cortex, and striatum. No expression in the cerebellum. Persistent expression is detected in hypothalamus throughout postnatal development, with maximum expression levels at puberty in both male and female. Hypothalamic expression changed throughout the estrus cycle and is significantly increased after gonadectomy, a rise that is prevented by sex steroid replacement both in males and females.

It localises to the cell membrane. Its function is as follows. Receptor for metastin, a C-terminally amidated peptide of KiSS1. KiSS1 is a metastasis suppressor protein. Activation of the receptor inhibits cell proliferation and cell migration, key characteristics of tumor metastasis. The receptor is essential for normal gonadotropin-released hormone physiology and for puberty. The hypothalamic KiSS1/KISS1R system is a pivotal factor in central regulation of the gonadotropic axis at puberty and in adulthood. Analysis of the transduction pathways activated by the receptor identifies coupling to phospholipase C and intracellular calcium release through pertussis toxin-insensitive G(q) proteins. This is KiSS-1 receptor (Kiss1r) from Rattus norvegicus (Rat).